A 1193-amino-acid chain; its full sequence is K(+) efflux antiporter 1, chloroplastic (1193 aa).

The transit peptide at 1-49 directs the protein to the chloroplast; the sequence is MEYASTFQRPILFHGGDGASYCFPNRLISPKGISITSGDSKVHSCFRLR. The Stromal portion of the chain corresponds to 50–585; that stretch reads RNVAQSGTLN…MIPHQEVNEE (536 aa). Positions 103-135 are disordered; that stretch reads SLGNADSNDHRIGESSESSDETEATDLKDARVE. Residues 131 to 355 are a coiled coil; sequence DARVENDTDS…RAEKSLSISQ (225 aa). An N6-acetyllysine; by NSI modification is found at K168. A compositionally biased stretch (polar residues) spans 351-364; sequence LSISQTPEETQGQL. Disordered regions lie at residues 351-372 and 421-474; these read LSISQTPEETQGQLSDEETSQE and QPYE…NSPK. Residues 439–465 show a composition bias toward basic and acidic residues; the sequence is KVVEADSEKPKINVQTKKQETQKDLPK. Residues 586 to 606 traverse the membrane as a helical segment; it reads EASLFDFLWLLLASVIFVPLF. The Chloroplast intermembrane segment spans residues 607–612; that stretch reads QKIPGG. A helical transmembrane segment spans residues 613–633; the sequence is SPVLGYLAAGILIGPYGLSII. Residues 634 to 640 lie on the Stromal side of the membrane; that stretch reads RNVHGTR. A helical membrane pass occupies residues 641–661; sequence AIAEFGVVFLLFNIGLELSVE. The Chloroplast intermembrane segment spans residues 662 to 668; the sequence is RLSSMKK. A helical membrane pass occupies residues 669–689; that stretch reads YVFGLGSAQVLVTAAVVGLLA. At 690–698 the chain is on the stromal side; the sequence is HYVAGQAGP. A helical membrane pass occupies residues 699 to 719; sequence AAIVIGNGLALSSTAVVLQVL. At 720–733 the chain is on the chloroplast intermembrane side; sequence QERGESTSRHGRAS. A helical membrane pass occupies residues 734–754; the sequence is FSVLLFQDLAVVVLLILIPLI. The Stromal segment spans residues 755-766; the sequence is SPNSSKGGIGFQ. Residues 767–787 form a helical membrane-spanning segment; that stretch reads AIAEALGLAAVKAAVAITAII. The Chloroplast intermembrane portion of the chain corresponds to 788 to 827; sequence AGGRLLLRPIYKQIAENRNAEIFSANTLLVILGTSLLTAR. A helical transmembrane segment spans residues 828 to 848; that stretch reads AGLSMALGAFLAGLLLAETEF. Over 849-860 the chain is Stromal; sequence SLQVESDIAPYR. A helical membrane pass occupies residues 861–881; sequence GLLLGLFFMTVGMSIDPKLLL. Residues 882-883 are Chloroplast intermembrane-facing; it reads SN. A helical membrane pass occupies residues 884–904; that stretch reads FPVIVGTLGLLIVGKTMLVVI. The Stromal portion of the chain corresponds to 905 to 912; the sequence is MGKLFGIS. Residues 913 to 933 traverse the membrane as a helical segment; that stretch reads IISAIRVGLLLAPGGEFAFVA. The Chloroplast intermembrane segment spans residues 934 to 948; it reads FGEAVNQGIMSPQLS. Residues 949–969 traverse the membrane as a helical segment; sequence SLLFLVVGISMAITPWLAAGG. Residues 970 to 1193 are Stromal-facing; it reads QLIASRFELH…QIIEGGTVVI (224 aa). An RCK N-terminal domain is found at 995–1112; it reads QGHIIICGFG…EKAGATAVVP (118 aa). Positions 1165–1184 are disordered; the sequence is GYSRTSKPKPQPSDASGDNQ.

Belongs to the monovalent cation:proton antiporter 2 (CPA2) transporter (TC 2.A.37) family. KEA (TC 2.A.37.1) subfamily. Post-translationally, acetylated at Lys-168 by the stromal acetyltransferase enzyme NSI. Expressed in shoots and roots. Mainly localized to leaf veins, hypocotyls, mesophylls and guard cells. Accumulates at high levels in small and dividing plastids (at protein level).

It is found in the plastid. The protein resides in the chloroplast inner membrane. It carries out the reaction K(+)(in) + H(+)(out) = K(+)(out) + H(+)(in). Repressed by sodium ions Na(+). In terms of biological role, electroneutral K(+)/H(+) efflux antiporter involved in chloroplastic K(+) homeostasis and osmotic adjustment, especially during plastid division and thylakoid membrane formation. Collaboratively with KEA2, adjusts alkaline stromal pH upon light to dark transitions in plastids. Together with KEA2, critical for chloroplast development, including chloroplast RNA-metabolism (e.g. rRNA maturation, polysome loading and RNA-protein interactions) and plastid gene expression (PGE), ion homeostasis, and photosynthesis. Contributes, during early seedling development, to the regulation of photosynthesis and abscisic acid- (ABA-) mediated primary root growth in a sucrose-dependent manner. Involved in the regulation of reactive oxygen and nitrogen species (ROS and RNS) metabolism. Required in roots for rapid hyperosmotic-induced Ca(2+) responses and for osmo-sensory potentiation in hyperosmotic conditions. May counteract resilience to drought and salt stress, involving photorespiratory pathway and stomata closure. In Arabidopsis thaliana (Mouse-ear cress), this protein is K(+) efflux antiporter 1, chloroplastic.